Here is a 320-residue protein sequence, read N- to C-terminus: Undecaprenyl-diphosphatase (320 aa).

8 consecutive transmembrane segments (helical) span residues 9-29 (FVLISAVSAALSVVLFPLEVF), 82-102 (GVAFTAIIQLGSIAAVLWYFW), 130-150 (LGIVLGTIPIVFFGLLIKTFI), 161-181 (LGAIAVASIVMSLLLGVGEKL), 191-211 (LTMQDGLLMGLAQALTLIPGV), 236-256 (FLLGIPAITLAGLVELKDLLA), 265-285 (LPLIMGVISAAIFSYLAIAGL), and 296-316 (VFIWYRLVFGVAILGAISAGI).

This sequence belongs to the UppP family.

It is found in the cell inner membrane. It catalyses the reaction di-trans,octa-cis-undecaprenyl diphosphate + H2O = di-trans,octa-cis-undecaprenyl phosphate + phosphate + H(+). Its function is as follows. Catalyzes the dephosphorylation of undecaprenyl diphosphate (UPP). Confers resistance to bacitracin. The chain is Undecaprenyl-diphosphatase from Nostoc sp. (strain PCC 7120 / SAG 25.82 / UTEX 2576).